A 98-amino-acid chain; its full sequence is NADH-ubiquinone oxidoreductase chain 4L (98 aa).

3 consecutive transmembrane segments (helical) span residues 1-21 (MAPI…GVLI), 28-48 (STLL…TLLI), and 59-79 (APLI…ALLV).

It belongs to the complex I subunit 4L family. Core subunit of respiratory chain NADH dehydrogenase (Complex I) which is composed of 45 different subunits.

The protein resides in the mitochondrion inner membrane. The enzyme catalyses a ubiquinone + NADH + 5 H(+)(in) = a ubiquinol + NAD(+) + 4 H(+)(out). Core subunit of the mitochondrial membrane respiratory chain NADH dehydrogenase (Complex I) which catalyzes electron transfer from NADH through the respiratory chain, using ubiquinone as an electron acceptor. Part of the enzyme membrane arm which is embedded in the lipid bilayer and involved in proton translocation. The protein is NADH-ubiquinone oxidoreductase chain 4L (MT-ND4L) of Perameles gunnii (Eastern barred bandicoot).